A 354-amino-acid chain; its full sequence is Ornithine transcarbamylase, mitochondrial (354 aa).

A mitochondrion-targeting transit peptide spans 1–32 (MLFNLKNLYRITKLTQNSKHLPRHFCRGPPNQ). Residues 90-94 (STRTR), arginine 141, and histidine 168 each bind carbamoyl phosphate. Arginine 141 is a binding site for L-ornithine. L-ornithine-binding positions include asparagine 199, 263–267 (DTWIS), 302–305 (HCLP), and arginine 330. Cysteine 303 is a catalytic residue. Arginine 330 contributes to the carbamoyl phosphate binding site.

This sequence belongs to the aspartate/ornithine carbamoyltransferase superfamily. OTCase family. As to quaternary structure, homotrimer. Cleavage of the precursor form to the active form occurs only in the kidney. As to expression, expressed in kidney, brain, heart, liver, pancreas, gizzard, small intestine and breast muscle. More abundant in mitochondrion-rich organs (heart, liver and brain) than in other organs. Activity is only detected in the kidney.

It localises to the mitochondrion matrix. It catalyses the reaction carbamoyl phosphate + L-ornithine = L-citrulline + phosphate + H(+). It functions in the pathway nitrogen metabolism; urea cycle; L-citrulline from L-ornithine and carbamoyl phosphate: step 1/1. Its activity is regulated as follows. Inhibition by ornithine increases at higher pH. Its function is as follows. Catalyzes the second step of the urea cycle, the condensation of carbamoyl phosphate with L-ornithine to form L-citrulline. The urea cycle ensures the detoxification of ammonia by converting it to urea for excretion. This is Ornithine transcarbamylase, mitochondrial from Gallus gallus (Chicken).